A 785-amino-acid chain; its full sequence is Copal-8-ol diphosphate hydratase TPSSA3, chloroplastic (785 aa).

R240 is a binding site for substrate. Positions 372 and 374 each coordinate Mg(2+). Residues 372–375 (DIDD) carry the DXDD motif motif. Position 459 (R459) interacts with substrate.

Belongs to the terpene synthase family. Mg(2+) is required as a cofactor.

Its subcellular location is the plastid. It localises to the chloroplast. It carries out the reaction (2E,6E,10E)-geranylgeranyl diphosphate + H2O = 8-hydroxycopalyl diphosphate. Its pathway is secondary metabolite biosynthesis; terpenoid biosynthesis. Functionally, involved in the biosynthesis of labdane-type diterpenoid including sclareol, a diterpene-diol that is used as fragrance and flavoring, and has anticancer effects (able to kill leukemic and colon cancer cells by apoptosis). Sclareol can also be used as synthesis precursor of ambergris substitution fragance products such as ambrox. Terpene synthase that produces 8-hydroxycopalyl diphosphate from geranylgeranyl diphosphate (GGPP). This Salvia sclarea (Clary sage) protein is Copal-8-ol diphosphate hydratase TPSSA3, chloroplastic.